Reading from the N-terminus, the 353-residue chain is 3'(2'),5'-bisphosphate nucleotidase 1 (353 aa).

The active-site Proton acceptor is D46. Mg(2+) is bound by residues E71, D134, I136, and D137. T139 acts as the Proton acceptor in catalysis. 6 residues coordinate adenosine 3',5'-bisphosphate: T139, H235, S259, K262, R276, and D288. Residues H235, S259, K262, R276, and D288 each contribute to the AMP site. D288 is a Mg(2+) binding site.

It belongs to the inositol monophosphatase superfamily. Requires Mg(2+) as cofactor. Expressed in roots, leaves, stems, flowers and siliques.

The enzyme catalyses 3'-phosphoadenylyl sulfate + H2O = adenosine 5'-phosphosulfate + phosphate. It catalyses the reaction adenosine 3',5'-bisphosphate + H2O = AMP + phosphate. It carries out the reaction adenosine 2',5'-bisphosphate + H2O = AMP + phosphate. The catalysed reaction is 1D-myo-inositol 1,4-bisphosphate + H2O = 1D-myo-inositol 4-phosphate + phosphate. The enzyme catalyses 1D-myo-inositol 1,3,4-trisphosphate + H2O = 1D-myo-inositol 3,4-bisphosphate + phosphate. It participates in signal transduction; phosphatidylinositol signaling pathway. Its activity is regulated as follows. Inhibited non-competitively by Li(+) (IC(50)=0.20 mM) and Na(+) (IC(50)=200 mM). Its function is as follows. Phosphatase that converts adenosine 3'-phosphate 5'-phosphosulfate (PAPS) to adenosine 5'-phosphosulfate (APS) and 3'(2')-phosphoadenosine 5'-phosphate (PAP) to AMP. May regulate the flux of sulfur in the sulfur-activation pathway by converting PAPS to APS. May play a role in the biosynthesis of sulfate conjugates and RNA processing. Is also able to hydrolyze inositol 1,4-bisphosphate and inositol 1,3,4-trisphosphate. Could be considered as a negative regulator of abscisic acid (ABA)- and stress-responsive genes, through modulating the inositol 1,4,5-trisphosphate (IP3) turnover. Is also involved in salt tolerance. Acts as a suppressor of virus- and transgene-induced silencing. This Arabidopsis thaliana (Mouse-ear cress) protein is 3'(2'),5'-bisphosphate nucleotidase 1.